Consider the following 416-residue polypeptide: Lipoyl synthase, mitochondrial (416 aa).

The transit peptide at 1–33 (MAAPTRSLRRLSSFRTTISPSLTVTAPIGCRSY) directs the protein to the mitochondrion. Positions 132, 137, 143, 163, 167, 170, and 378 each coordinate [4Fe-4S] cluster. In terms of domain architecture, Radical SAM core spans 148–367 (DKSSATATIM…RQRALDMGFL (220 aa)). The interval 396 to 416 (GSGTAERTVDQTAATTDEATR) is disordered. A compositionally biased stretch (polar residues) spans 405-416 (DQTAATTDEATR).

This sequence belongs to the radical SAM superfamily. Lipoyl synthase family. Requires [4Fe-4S] cluster as cofactor.

It is found in the mitochondrion. The catalysed reaction is [[Fe-S] cluster scaffold protein carrying a second [4Fe-4S](2+) cluster] + N(6)-octanoyl-L-lysyl-[protein] + 2 oxidized [2Fe-2S]-[ferredoxin] + 2 S-adenosyl-L-methionine + 4 H(+) = [[Fe-S] cluster scaffold protein] + N(6)-[(R)-dihydrolipoyl]-L-lysyl-[protein] + 4 Fe(3+) + 2 hydrogen sulfide + 2 5'-deoxyadenosine + 2 L-methionine + 2 reduced [2Fe-2S]-[ferredoxin]. Its pathway is protein modification; protein lipoylation via endogenous pathway; protein N(6)-(lipoyl)lysine from octanoyl-[acyl-carrier-protein]: step 2/2. Its function is as follows. Catalyzes the radical-mediated insertion of two sulfur atoms into the C-6 and C-8 positions of the octanoyl moiety bound to the lipoyl domains of lipoate-dependent enzymes, thereby converting the octanoylated domains into lipoylated derivatives. This chain is Lipoyl synthase, mitochondrial, found in Penicillium rubens (strain ATCC 28089 / DSM 1075 / NRRL 1951 / Wisconsin 54-1255) (Penicillium chrysogenum).